A 172-amino-acid polypeptide reads, in one-letter code: MGDPKKPRKKWQGPSHPWRKETLLEEMQLVGEYGLRNKRELWIAKSLLREIRAKARKLLALPAEERIKLEKPLVSRLYKMGLLPSEDASLDDVLSLTVRDVLERRLQTIVYRKGLATTIRHARQLITHGHIAVNSRRVRSPGYLVSRDEENFISYYEGSPLAKMAQGGAQNV.

Residues 104–168 enclose the S4 RNA-binding domain; it reads RRLQTIVYRK…SPLAKMAQGG (65 aa).

This sequence belongs to the universal ribosomal protein uS4 family. As to quaternary structure, part of the 30S ribosomal subunit. Contacts protein S5. The interaction surface between S4 and S5 is involved in control of translational fidelity.

One of the primary rRNA binding proteins, it binds directly to 16S rRNA where it nucleates assembly of the body of the 30S subunit. In terms of biological role, with S5 and S12 plays an important role in translational accuracy. This chain is Small ribosomal subunit protein uS4, found in Thermofilum pendens (strain DSM 2475 / Hrk 5).